The chain runs to 179 residues: Large ribosomal subunit protein uL6 (179 aa).

Belongs to the universal ribosomal protein uL6 family. Part of the 50S ribosomal subunit.

Its function is as follows. This protein binds to the 23S rRNA, and is important in its secondary structure. It is located near the subunit interface in the base of the L7/L12 stalk, and near the tRNA binding site of the peptidyltransferase center. The chain is Large ribosomal subunit protein uL6 from Chlorobium chlorochromatii (strain CaD3).